The following is a 681-amino-acid chain: Transmembrane protein 214-A (681 aa).

2 disordered regions span residues 1–41 (MASG…GTAP) and 58–99 (KKQN…GSRQ). 2 N-linked (GlcNAc...) asparagine glycosylation sites follow: Asn300 and Asn324. The next 2 helical transmembrane spans lie at 471-491 (GFPWRRLIVIAFVFLFGFVFY) and 608-628 (LLLHLHRTYLLPAVTYLEAAV).

The protein belongs to the TMEM214 family. In terms of assembly, constitutively interacts with CASP4; required for the localization of procaspase 4 to the ER.

It is found in the endoplasmic reticulum membrane. Critical mediator, in cooperation with CASP4, of endoplasmic reticulum-stress induced apoptosis. Required or the activation of CASP4 following endoplasmic reticulum stress. The polypeptide is Transmembrane protein 214-A (tmem214-a) (Xenopus laevis (African clawed frog)).